A 207-amino-acid polypeptide reads, in one-letter code: Small ribosomal subunit protein uS4 (207 aa).

Residues 31-55 (KCKLDSKPGQHGRTSGARTSDYGTQ) form a disordered region. Residues 42–53 (GRTSGARTSDYG) show a composition bias toward polar residues. The S4 RNA-binding domain occupies 97–160 (SRLDNVVYRM…KKQARIVEAL (64 aa)).

Belongs to the universal ribosomal protein uS4 family. In terms of assembly, part of the 30S ribosomal subunit. Contacts protein S5. The interaction surface between S4 and S5 is involved in control of translational fidelity.

In terms of biological role, one of the primary rRNA binding proteins, it binds directly to 16S rRNA where it nucleates assembly of the body of the 30S subunit. With S5 and S12 plays an important role in translational accuracy. This chain is Small ribosomal subunit protein uS4, found in Burkholderia ambifaria (strain ATCC BAA-244 / DSM 16087 / CCUG 44356 / LMG 19182 / AMMD) (Burkholderia cepacia (strain AMMD)).